Reading from the N-terminus, the 199-residue chain is Probable GTP-binding protein EngB (199 aa).

The EngB-type G domain occupies 28–199; the sequence is DIPEIALAGR…QAWDAILEQI (172 aa). GTP contacts are provided by residues 36–43, 63–67, 81–84, 148–151, and 180–182; these read GRSNVGKS, GKTQL, DVPG, TKAD, and FSS. S43 and T65 together coordinate Mg(2+).

This sequence belongs to the TRAFAC class TrmE-Era-EngA-EngB-Septin-like GTPase superfamily. EngB GTPase family. The cofactor is Mg(2+).

Its function is as follows. Necessary for normal cell division and for the maintenance of normal septation. This Streptococcus uberis (strain ATCC BAA-854 / 0140J) protein is Probable GTP-binding protein EngB.